The primary structure comprises 331 residues: Protein PER1 homolog (331 aa).

The N-terminal stretch at 1-24 (MRVLRNFTIFFLFTALSLFRQISA) is a signal peptide. The Lumenal portion of the chain corresponds to 25–100 (SAGDLHPVYV…QYHGKWYFIR (76 aa)). A helical membrane pass occupies residues 101–121 (VFGIQELFSVFFSMLNFMIHY). The Cytoplasmic segment spans residues 122–139 (NGYHIMRRCIPDEHPAKR). A helical transmembrane segment spans residues 140-160 (LCLSWAIVGMNAWVWSSVFHI). At 161–168 (RDTPITEK) the chain is on the lumenal side. A helical membrane pass occupies residues 169-189 (LDYFSAGAFVLFGSYCTLILM). Over 190 to 199 (LRLDQLPGGK) the chain is Cytoplasmic. Residues 200–220 (LLCWIIGVIFIAAFIAHVSYL) traverse the membrane as a helical segment. The Lumenal portion of the chain corresponds to 221-232 (SFYSFDYGYNMK). A helical transmembrane segment spans residues 233–250 (ANVAVGLVQNILWYYYSW). Residues 251–263 (SNRNSGLYWTRWP) are Cytoplasmic-facing. The chain crosses the membrane as a helical span at residues 264-284 (AYIVTSLMLATSLELFDFSPI). Over 285-289 (ANLID) the chain is Lumenal. The helical transmembrane segment at 290–310 (AHALWHLSTVPITHYLYGFVV) threads the bilayer. Residues 311–331 (RKCSYDLTKGTFKIKAYDSSR) are Cytoplasmic-facing.

Belongs to the PGAP3/PER1 family.

It localises to the endoplasmic reticulum membrane. It is found in the vacuole membrane. Its function is as follows. Involved in the lipid remodeling steps of GPI-anchor maturation. Lipid remodeling steps consist in the generation of 2 saturated fatty chains at the sn-2 position of GPI-anchors proteins. Required for phospholipase A2 activity that removes an acyl-chain at the sn-2 position of GPI-anchors during the remodeling of GPI. Required for efficient transport of GPI-anchor proteins. The chain is Protein PER1 homolog from Schizosaccharomyces pombe (strain 972 / ATCC 24843) (Fission yeast).